The sequence spans 196 residues: Glycerol-3-phosphate acyltransferase (196 aa).

5 helical membrane-spanning segments follow: residues 4 to 24, 53 to 73, 78 to 98, 114 to 134, and 140 to 160; these read FYIMLLAAYLIGAIPTGVVLT, LGVLTLIGDALKGAVPVLIAI, LGDAQVGAVAAAAFIGHCYPV, IFLVLSPLAVLGAFAVFALLV, and VSLGSICAAAAIPILVYFTEG.

It belongs to the PlsY family. In terms of assembly, probably interacts with PlsX.

It is found in the cell inner membrane. The catalysed reaction is an acyl phosphate + sn-glycerol 3-phosphate = a 1-acyl-sn-glycero-3-phosphate + phosphate. The protein operates within lipid metabolism; phospholipid metabolism. In terms of biological role, catalyzes the transfer of an acyl group from acyl-phosphate (acyl-PO(4)) to glycerol-3-phosphate (G3P) to form lysophosphatidic acid (LPA). This enzyme utilizes acyl-phosphate as fatty acyl donor, but not acyl-CoA or acyl-ACP. The protein is Glycerol-3-phosphate acyltransferase of Syntrophotalea carbinolica (strain DSM 2380 / NBRC 103641 / GraBd1) (Pelobacter carbinolicus).